The chain runs to 208 residues: Large ribosomal subunit protein bL25 (208 aa).

It belongs to the bacterial ribosomal protein bL25 family. CTC subfamily. Part of the 50S ribosomal subunit; part of the 5S rRNA/L5/L18/L25 subcomplex. Contacts the 5S rRNA. Binds to the 5S rRNA independently of L5 and L18.

This is one of the proteins that binds to the 5S RNA in the ribosome where it forms part of the central protuberance. In Burkholderia pseudomallei (strain K96243), this protein is Large ribosomal subunit protein bL25.